The following is a 681-amino-acid chain: MIDRYKHQQLRIGSVSPQQISAWATKILPNGEIVGEVTKPYTFHYKTNKPEKDGLFCERIFGPIKSGICACGNYRVIGDEKEDPKFCEQCGVEFVDSRIRRYQMGYIKLACPVTHVWYLKRLPSYIANLLDKPLKELEGLVYCDFSFARPITKKPTFLRLRGLFEYEIQSWKYSIPLFFTTQGFDTFRNREISTGAGAIREQLADLDLRIIIENSLVEWEELGEEGHTGNEWEDRKVGRRKDFLVRRVELAKHFIRTNIEPEWMVLCLLPVLPPELRPIIQIDGGKLMSSDINELYRRVIYRNNTLTDLLTTSRSTPGELVMCQEKLVQEAVDTLLDNGIRGQPMRDGHNKVYKSFSDVIEGKEGRFRETLLGKRVDYSGRSVIVVGPSLSLHRCGLPREIAIELFQTFVIRGLIRQHLASNIGVAKSKIREKEPIVWEILQEVMQGHPVLLNRAPTLHRLGIQAFQPVLVEGRAICLHPLVCKGFNADFDGDQMAVHVPLSLEAQVEARLLMFSHMNLLSPAIGDPISVPTQDMLIGLYVLTSGNHRGICVNRYNPCNRRNYQNQKRSDNSYYKYTKEPFFSNSYDAIGAYRQKRINLDSPLWLRWRLDQRVIASRETPIEVHYESLGTFYEIYGHYLIVRSLKKKILFIYIRTTVGHIALYREIEEAIQGFSRAYSYAT.

The Zn(2+) site is built by Cys69, Cys71, Cys87, and Cys90. Positions 489, 491, and 493 each coordinate Mg(2+).

The protein belongs to the RNA polymerase beta' chain family. RpoC1 subfamily. In terms of assembly, in plastids the minimal PEP RNA polymerase catalytic core is composed of four subunits: alpha, beta, beta', and beta''. When a (nuclear-encoded) sigma factor is associated with the core the holoenzyme is formed, which can initiate transcription. Requires Mg(2+) as cofactor. It depends on Zn(2+) as a cofactor.

It localises to the plastid. The protein resides in the chloroplast. It carries out the reaction RNA(n) + a ribonucleoside 5'-triphosphate = RNA(n+1) + diphosphate. DNA-dependent RNA polymerase catalyzes the transcription of DNA into RNA using the four ribonucleoside triphosphates as substrates. This Solanum bulbocastanum (Wild potato) protein is DNA-directed RNA polymerase subunit beta'.